Reading from the N-terminus, the 232-residue chain is tRNA (guanine-N(7)-)-methyltransferase (232 aa).

E63, E88, D115, and D137 together coordinate S-adenosyl-L-methionine. The active site involves D137. Residues K141, D173, and 211–214 each bind substrate; that span reads TRYE.

The protein belongs to the class I-like SAM-binding methyltransferase superfamily. TrmB family.

The catalysed reaction is guanosine(46) in tRNA + S-adenosyl-L-methionine = N(7)-methylguanosine(46) in tRNA + S-adenosyl-L-homocysteine. It functions in the pathway tRNA modification; N(7)-methylguanine-tRNA biosynthesis. Catalyzes the formation of N(7)-methylguanine at position 46 (m7G46) in tRNA. This chain is tRNA (guanine-N(7)-)-methyltransferase, found in Agrobacterium fabrum (strain C58 / ATCC 33970) (Agrobacterium tumefaciens (strain C58)).